A 311-amino-acid polypeptide reads, in one-letter code: Dihydroorotate dehydrogenase B (NAD(+)), catalytic subunit (311 aa).

FMN is bound by residues S24 and K48–A49. Substrate is bound by residues K48 and N72–L76. Residues N104 and N132 each contribute to the FMN site. Residue N132 participates in substrate binding. C135 (nucleophile) is an active-site residue. FMN contacts are provided by K170 and I196. N197–T198 lines the substrate pocket. FMN-binding positions include G222, G248–G249, and G270–T271.

The protein belongs to the dihydroorotate dehydrogenase family. Type 1 subfamily. As to quaternary structure, heterotetramer of 2 PyrK and 2 PyrD type B subunits. It depends on FMN as a cofactor.

The protein localises to the cytoplasm. The enzyme catalyses (S)-dihydroorotate + NAD(+) = orotate + NADH + H(+). Its pathway is pyrimidine metabolism; UMP biosynthesis via de novo pathway; orotate from (S)-dihydroorotate (NAD(+) route): step 1/1. In terms of biological role, catalyzes the conversion of dihydroorotate to orotate with NAD(+) as electron acceptor. Cannot use fumarate as an electron acceptor. The protein is Dihydroorotate dehydrogenase B (NAD(+)), catalytic subunit (pyrDB) of Lactococcus lactis subsp. cremoris (strain MG1363).